The sequence spans 341 residues: Cell wall mannoprotein PIR1 (341 aa).

The N-terminal stretch at 1–18 is a signal peptide; it reads MQYKKSLVASALVATSLA. The propeptide occupies 19 to 63; the sequence is AYAPKDPWSTLTPSATYKGGITDYSSTFGIAVEPIATTASSKAKR. PIR1/2/3 repeat units follow at residues 64–82, 83–101, 102–120, 126–144, 145–163, 164–182, 183–201, and 202–220; these read AAAI…TKTT, AAAV…TKTK, AAAV…TKTT, AAAV…TNTT, and VAPV…TLTS.

The protein belongs to the PIR protein family. Post-translationally, covalently linked to beta-1,3-glucan of the inner cell wall layer via an alkali-sensitive ester linkage between the gamma-carboxyl group of glutamic acids, arising from specific glutamines within the PIR1/2/3 repeats, and hydroxyl groups of glucoses of beta-1,3-glucan chains. O-glycosylated. Extensively O-mannosylated.

It localises to the secreted. The protein resides in the cell wall. In terms of biological role, component of the outer cell wall layer. Required for stability of the cell wall and for optimal growth. Required for resistance against several antifungal and cell wall-perturbing agents and for tolerance to heat shock. The polypeptide is Cell wall mannoprotein PIR1 (PIR1) (Saccharomyces cerevisiae (strain YJM789) (Baker's yeast)).